Consider the following 399-residue polypeptide: MELLNIKNLDLAGKKVFIRCDFNVPMDEFGNISDDRRIRSAVSTINYCLDQECAVILASHLGRPEGEVVDKYSLIPIARRIQHLLRREVDLASDVVGEDALKRASELKSGQVLMLENLRYEAGETKNDKELSKKLASMADFYINDAFGVSHRAHASVEGITHFFDDKHKAAGFLLQKEIDFLGKIIQNPVRPFAAIVGGSKVSGKLEALINLLPRVDKVLIGGGMAFTFLKKLGYDIGASLVEDDLLEEAGRIMDEAKKLGVKFYLPVDVVVADKFSEDAISKIVSYQEIPPLWMGLDIGPATVRLYGEVLSDVQTVLWNGPMGVYEMDKFARGSNKIAHFVADSYATTIVGGGDTADLVQRIGVDDEMTFISTGGGASLELLEGKILPGVASLIRKKG.

Substrate contacts are provided by residues 21–23 (DFN), Arg-37, 60–63 (HLGR), Arg-119, and Arg-152. ATP-binding positions include Lys-205, Gly-296, Glu-327, and 353 to 356 (GGDT).

This sequence belongs to the phosphoglycerate kinase family. As to quaternary structure, monomer.

It is found in the cytoplasm. The catalysed reaction is (2R)-3-phosphoglycerate + ATP = (2R)-3-phospho-glyceroyl phosphate + ADP. It functions in the pathway carbohydrate degradation; glycolysis; pyruvate from D-glyceraldehyde 3-phosphate: step 2/5. The sequence is that of Phosphoglycerate kinase from Sulfurimonas denitrificans (strain ATCC 33889 / DSM 1251) (Thiomicrospira denitrificans (strain ATCC 33889 / DSM 1251)).